The chain runs to 338 residues: Glycerol-3-phosphate dehydrogenase [NAD(P)+] (338 aa).

Tryptophan 11, arginine 30, and lysine 109 together coordinate NADPH. The sn-glycerol 3-phosphate site is built by lysine 109, glycine 143, and serine 145. Alanine 147 contributes to the NADPH binding site. 5 residues coordinate sn-glycerol 3-phosphate: lysine 198, aspartate 251, serine 261, arginine 262, and asparagine 263. Catalysis depends on lysine 198, which acts as the Proton acceptor. An NADPH-binding site is contributed by arginine 262. NADPH contacts are provided by valine 286 and glutamate 288.

It belongs to the NAD-dependent glycerol-3-phosphate dehydrogenase family.

It localises to the cytoplasm. The enzyme catalyses sn-glycerol 3-phosphate + NAD(+) = dihydroxyacetone phosphate + NADH + H(+). The catalysed reaction is sn-glycerol 3-phosphate + NADP(+) = dihydroxyacetone phosphate + NADPH + H(+). It participates in membrane lipid metabolism; glycerophospholipid metabolism. Functionally, catalyzes the reduction of the glycolytic intermediate dihydroxyacetone phosphate (DHAP) to sn-glycerol 3-phosphate (G3P), the key precursor for phospholipid synthesis. This Cupriavidus taiwanensis (strain DSM 17343 / BCRC 17206 / CCUG 44338 / CIP 107171 / LMG 19424 / R1) (Ralstonia taiwanensis (strain LMG 19424)) protein is Glycerol-3-phosphate dehydrogenase [NAD(P)+].